We begin with the raw amino-acid sequence, 257 residues long: Imidazole glycerol phosphate synthase subunit HisF (257 aa).

Catalysis depends on residues aspartate 12 and aspartate 131.

The protein belongs to the HisA/HisF family. As to quaternary structure, heterodimer of HisH and HisF.

The protein localises to the cytoplasm. The enzyme catalyses 5-[(5-phospho-1-deoxy-D-ribulos-1-ylimino)methylamino]-1-(5-phospho-beta-D-ribosyl)imidazole-4-carboxamide + L-glutamine = D-erythro-1-(imidazol-4-yl)glycerol 3-phosphate + 5-amino-1-(5-phospho-beta-D-ribosyl)imidazole-4-carboxamide + L-glutamate + H(+). The protein operates within amino-acid biosynthesis; L-histidine biosynthesis; L-histidine from 5-phospho-alpha-D-ribose 1-diphosphate: step 5/9. Its function is as follows. IGPS catalyzes the conversion of PRFAR and glutamine to IGP, AICAR and glutamate. The HisF subunit catalyzes the cyclization activity that produces IGP and AICAR from PRFAR using the ammonia provided by the HisH subunit. The polypeptide is Imidazole glycerol phosphate synthase subunit HisF (Nocardia farcinica (strain IFM 10152)).